We begin with the raw amino-acid sequence, 514 residues long: Probable peptidoglycan glycosyltransferase FtsW (514 aa).

9 helical membrane-spanning segments follow: residues 45-65 (IGLI…VTSA), 86-106 (IYIV…MQFW), 108-128 (TANP…LLVG), 137-157 (WLAL…FFFT), 182-202 (VVFF…TVVV), 218-238 (LWQF…LIVF), 301-321 (ILAE…ILWM), 347-367 (VGIW…GILP), and 373-393 (LPLV…VALL). Disordered stretches follow at residues 411-437 (GDNK…RTKH) and 449-501 (DYNQ…AGIK).

The protein belongs to the SEDS family. FtsW subfamily.

It is found in the cell inner membrane. It catalyses the reaction [GlcNAc-(1-&gt;4)-Mur2Ac(oyl-L-Ala-gamma-D-Glu-L-Lys-D-Ala-D-Ala)](n)-di-trans,octa-cis-undecaprenyl diphosphate + beta-D-GlcNAc-(1-&gt;4)-Mur2Ac(oyl-L-Ala-gamma-D-Glu-L-Lys-D-Ala-D-Ala)-di-trans,octa-cis-undecaprenyl diphosphate = [GlcNAc-(1-&gt;4)-Mur2Ac(oyl-L-Ala-gamma-D-Glu-L-Lys-D-Ala-D-Ala)](n+1)-di-trans,octa-cis-undecaprenyl diphosphate + di-trans,octa-cis-undecaprenyl diphosphate + H(+). The protein operates within cell wall biogenesis; peptidoglycan biosynthesis. Peptidoglycan polymerase that is essential for cell division. The polypeptide is Probable peptidoglycan glycosyltransferase FtsW (Alteromonas naphthalenivorans).